The sequence spans 193 residues: Proton-translocating ferredoxin:NAD(+) oxidoreductase complex subunit A (193 aa).

6 consecutive transmembrane segments (helical) span residues 11-31, 39-59, 62-82, 102-122, 134-154, and 171-191; these read AVVVNNYVLTRFLGLCIFFGV, VGMGMAVTSVITMSSILAWVV, FVLIPFNLTFLKTVVFVLLIA, MWGIYLLLIATNCIVLAVPIL, VVNAIGSGLGFAMAIILMASL, and GVAFILAGMLALAFLGFSGMI.

It belongs to the NqrDE/RnfAE family. The complex is composed of six subunits: RnfA, RnfB, RnfC, RnfD, RnfE and RnfG.

It is found in the cell membrane. Its function is as follows. Part of a membrane-bound complex that couples electron transfer with translocation of ions across the membrane. Couples electron transfer from reduced ferredoxin to NAD(+) with translocation of H(+) out of the cell. Essential for energy conservation during autotrophic growth. Contributes to ATP synthesis during heterotrophic growth. This is Proton-translocating ferredoxin:NAD(+) oxidoreductase complex subunit A from Clostridium ljungdahlii (strain ATCC 55383 / DSM 13528 / PETC).